A 430-amino-acid polypeptide reads, in one-letter code: Lipoyl synthase, mitochondrial (430 aa).

A mitochondrion-targeting transit peptide spans 1–37; the sequence is MATSAGKLRTLYSAHSSLSSLPPSARPTLQLATLRSY. Polar residues predominate over residues 39–55; the sequence is TTTPHDSPIGNTSNTPP. The interval 39–59 is disordered; it reads TTTPHDSPIGNTSNTPPTVKR. Residues cysteine 141, cysteine 146, cysteine 152, cysteine 172, cysteine 176, cysteine 179, and serine 387 each contribute to the [4Fe-4S] cluster site. The 222-residue stretch at 155–376 folds into the Radical SAM core domain; sequence GSSKSAATAT…KERALEMGFL (222 aa).

It belongs to the radical SAM superfamily. Lipoyl synthase family. Requires [4Fe-4S] cluster as cofactor.

It is found in the mitochondrion. It catalyses the reaction [[Fe-S] cluster scaffold protein carrying a second [4Fe-4S](2+) cluster] + N(6)-octanoyl-L-lysyl-[protein] + 2 oxidized [2Fe-2S]-[ferredoxin] + 2 S-adenosyl-L-methionine + 4 H(+) = [[Fe-S] cluster scaffold protein] + N(6)-[(R)-dihydrolipoyl]-L-lysyl-[protein] + 4 Fe(3+) + 2 hydrogen sulfide + 2 5'-deoxyadenosine + 2 L-methionine + 2 reduced [2Fe-2S]-[ferredoxin]. It participates in protein modification; protein lipoylation via endogenous pathway; protein N(6)-(lipoyl)lysine from octanoyl-[acyl-carrier-protein]: step 2/2. Functionally, catalyzes the radical-mediated insertion of two sulfur atoms into the C-6 and C-8 positions of the octanoyl moiety bound to the lipoyl domains of lipoate-dependent enzymes, thereby converting the octanoylated domains into lipoylated derivatives. The sequence is that of Lipoyl synthase, mitochondrial from Ajellomyces capsulatus (strain H143) (Darling's disease fungus).